The primary structure comprises 195 residues: HTH-type transcriptional regulator BetI (195 aa).

An HTH tetR-type domain is found at 8–68 (SIRRRQLIDA…ATMRDITSQL (61 aa)). The H-T-H motif DNA-binding region spans 31–50 (TIAQIARRAGVSTGIISHYF).

It functions in the pathway amine and polyamine biosynthesis; betaine biosynthesis via choline pathway [regulation]. Its function is as follows. Repressor involved in the biosynthesis of the osmoprotectant glycine betaine. It represses transcription of the choline transporter BetT and the genes of BetAB involved in the synthesis of glycine betaine. This chain is HTH-type transcriptional regulator BetI, found in Escherichia coli O157:H7.